We begin with the raw amino-acid sequence, 560 residues long: DNA ligase B (560 aa).

K124 serves as the catalytic N6-AMP-lysine intermediate.

Belongs to the NAD-dependent DNA ligase family. LigB subfamily.

The enzyme catalyses NAD(+) + (deoxyribonucleotide)n-3'-hydroxyl + 5'-phospho-(deoxyribonucleotide)m = (deoxyribonucleotide)n+m + AMP + beta-nicotinamide D-nucleotide.. In terms of biological role, catalyzes the formation of phosphodiester linkages between 5'-phosphoryl and 3'-hydroxyl groups in double-stranded DNA using NAD as a coenzyme and as the energy source for the reaction. This chain is DNA ligase B, found in Citrobacter koseri (strain ATCC BAA-895 / CDC 4225-83 / SGSC4696).